We begin with the raw amino-acid sequence, 287 residues long: L-ascorbate peroxidase 3 (287 aa).

The residue at position 2 (A2) is an N-acetylalanine. The Proton acceptor role is filled by H40. A disordered region spans residues 46–66 (DAQSKTGGPNGSIRNEEEHTH). H160 provides a ligand contact to heme b. K(+) is bound by residues T161, T177, and D184. Residues 259–279 (ILAQSAFGVAVAAAVVAFGYF) traverse the membrane as a helical segment. An AKR2A-binding sequence (ABS) required for peroxisome membrane targeting motif is present at residues 281 to 287 (EIRKRMK).

It belongs to the peroxidase family. Ascorbate peroxidase subfamily. Interacts via its C-terminal region with AKR2A and AKR2B. Heme b serves as cofactor.

It is found in the peroxisome membrane. It localises to the glyoxysome membrane. It catalyses the reaction L-ascorbate + H2O2 = L-dehydroascorbate + 2 H2O. In terms of biological role, plays a key role in hydrogen peroxide removal. The protein is L-ascorbate peroxidase 3 (APX3) of Arabidopsis thaliana (Mouse-ear cress).